We begin with the raw amino-acid sequence, 29 residues long: Neurotoxin BmK A3-6 (29 aa).

Post-translationally, contains 3 disulfide bonds. In terms of tissue distribution, expressed by the venom gland.

It is found in the secreted. This chain is Neurotoxin BmK A3-6, found in Olivierus martensii (Manchurian scorpion).